The sequence spans 115 residues: ATP-dependent Clp protease adapter protein ClpS (115 aa).

The protein belongs to the ClpS family. As to quaternary structure, binds to the N-terminal domain of the chaperone ClpA.

In terms of biological role, involved in the modulation of the specificity of the ClpAP-mediated ATP-dependent protein degradation. The polypeptide is ATP-dependent Clp protease adapter protein ClpS (Leptothrix cholodnii (strain ATCC 51168 / LMG 8142 / SP-6) (Leptothrix discophora (strain SP-6))).